Reading from the N-terminus, the 158-residue chain is Ribonucleases P/MRP protein subunit POP6 (158 aa).

Positions 51–71 (KNDNIKKSVNKLDKQINMADR) form a coiled coil.

Component of nuclear RNase P and RNase MRP complexes. RNase P consists of an RNA moiety and at least 9 protein subunits including POP1, POP3, POP4, POP5, POP6, POP7, POP8, RPP1 and RPR2. RNase MRP complex consists of an RNA moiety and at least 10 protein subunits including POP1, POP3, POP4, POP5, POP6, POP7, POP8, RMP1, RPP1 and SNM1, many of which are shared with the RNase P complex.

It localises to the nucleus. The enzyme catalyses Endonucleolytic cleavage of RNA, removing 5'-extranucleotides from tRNA precursor.. Its function is as follows. Component of ribonuclease P, a protein complex that generates mature tRNA molecules by cleaving their 5'-ends. Also a component of RNase MRP, which cleaves pre-rRNA sequences. The polypeptide is Ribonucleases P/MRP protein subunit POP6 (POP6) (Saccharomyces cerevisiae (strain ATCC 204508 / S288c) (Baker's yeast)).